A 149-amino-acid chain; its full sequence is 3-dehydroquinate dehydratase (149 aa).

Tyrosine 24 serves as the catalytic Proton acceptor. Substrate contacts are provided by asparagine 76, histidine 82, and aspartate 89. Residue histidine 102 is the Proton donor of the active site. Substrate is bound by residues 103-104 (LS) and arginine 113.

This sequence belongs to the type-II 3-dehydroquinase family. In terms of assembly, homododecamer.

The catalysed reaction is 3-dehydroquinate = 3-dehydroshikimate + H2O. It functions in the pathway metabolic intermediate biosynthesis; chorismate biosynthesis; chorismate from D-erythrose 4-phosphate and phosphoenolpyruvate: step 3/7. Its function is as follows. Catalyzes a trans-dehydration via an enolate intermediate. The polypeptide is 3-dehydroquinate dehydratase (Acinetobacter baylyi (strain ATCC 33305 / BD413 / ADP1)).